A 50-amino-acid chain; its full sequence is Protein HokE (50 aa).

Residues 5-25 traverse the membrane as a helical segment; the sequence is YALVAVIVLCLTVLGFTLLVG.

This sequence belongs to the Hok/Gef family.

It localises to the cell inner membrane. Its function is as follows. Toxic component of a type I toxin-antitoxin (TA) system. When overexpressed kills cells within minutes; causes collapse of the transmembrane potential and arrest of respiration. Its toxic effect is probably neutralized by an antisense antitoxin Sok RNA. This is Protein HokE (hokE) from Escherichia coli O157:H7.